Here is a 235-residue protein sequence, read N- to C-terminus: UPF0502 protein Bcep18194_B0081 (235 aa).

This sequence belongs to the UPF0502 family.

This Burkholderia lata (strain ATCC 17760 / DSM 23089 / LMG 22485 / NCIMB 9086 / R18194 / 383) protein is UPF0502 protein Bcep18194_B0081.